Consider the following 253-residue polypeptide: Peptidase inhibitor R3HDML (253 aa).

Positions 1–23 (MPLLSSIVGLTGLLLWMGHTVGA) are cleaved as a signal peptide. A propeptide spanning residues 24-56 (LRMPNTTLVQGRPKNTAVWPLSGLGVPRHRRKR) is cleaved from the precursor. N-linked (GlcNAc...) asparagine glycans are attached at residues N28 and N120. An SCP domain is found at 67 to 207 (LDYHNHIRAS…QQAVYLVCNY (141 aa)).

It belongs to the CRISP family.

It is found in the secreted. Putative serine protease inhibitor. The chain is Peptidase inhibitor R3HDML (R3hdml) from Mus musculus (Mouse).